The sequence spans 681 residues: Terpene synthase 6, chloroplastic (681 aa).

D433, D437, N577, and E585 together coordinate Mg(2+). A DDXXD motif motif is present at residues 433–437 (DDLFD).

This sequence belongs to the terpene synthase family. Mg(2+) is required as a cofactor. In terms of tissue distribution, expressed in leaves.

The protein localises to the plastid. It localises to the chloroplast. The protein operates within secondary metabolite biosynthesis; terpenoid biosynthesis. May be involved in the biosynthesis of ent-kaurene diterpenoids natural products such as oridonin, miltiradiene, eriocalyxin B and nezukol, known to exhibit antitumor, anti-inflammatory and antibacterial activities. In Isodon rubescens (Rabdosia rubescens), this protein is Terpene synthase 6, chloroplastic.